A 223-amino-acid polypeptide reads, in one-letter code: UPF0441 protein YgiB (223 aa).

Positions 178 to 195 (TVPKTAMAPKPATTTTVT) are enriched in low complexity. The interval 178-223 (TVPKTAMAPKPATTTTVTRGGFGESVAKQSTMQRGATGTSSRSMGG) is disordered. The span at 204-223 (AKQSTMQRGATGTSSRSMGG) shows a compositional bias: polar residues.

The protein belongs to the UPF0441 family.

The sequence is that of UPF0441 protein YgiB from Escherichia coli O6:K15:H31 (strain 536 / UPEC).